The sequence spans 368 residues: DNA-directed RNA polymerase subunit alpha (368 aa).

The segment at 1–231 is alpha N-terminal domain (alpha-NTD); sequence MLWKGFQKPK…DHMNIFINFE (231 aa). The tract at residues 243-368 is alpha C-terminal domain (alpha-CTD); it reads KPEIRNENLN…GFGGDNNPGF (126 aa).

This sequence belongs to the RNA polymerase alpha chain family. Homodimer. The RNAP catalytic core consists of 2 alpha, 1 beta, 1 beta' and 1 omega subunit. When a sigma factor is associated with the core the holoenzyme is formed, which can initiate transcription.

The enzyme catalyses RNA(n) + a ribonucleoside 5'-triphosphate = RNA(n+1) + diphosphate. DNA-dependent RNA polymerase catalyzes the transcription of DNA into RNA using the four ribonucleoside triphosphates as substrates. The chain is DNA-directed RNA polymerase subunit alpha from Koribacter versatilis (strain Ellin345).